The sequence spans 76 residues: Esculentin-2SN1 (76 aa).

A signal peptide spans 1 to 22 (MFTMKKSLLFLFFLGTISLSLC). A propeptide spanning residues 23 to 37 (EQERGADEDDGGEEV) is cleaved from the precursor. Cys70 and Cys76 are oxidised to a cystine.

Belongs to the frog skin active peptide (FSAP) family. Esculentin subfamily. As to expression, expressed by the skin glands.

It localises to the secreted. In terms of biological role, antimicrobial peptide. Active against some Gram-negative and a variety of Gram-positive bacterial strains. Not active against fungi. Shows very weak hemolytic activity against human erythrocytes. This chain is Esculentin-2SN1, found in Sylvirana spinulosa (Fine-spined frog).